We begin with the raw amino-acid sequence, 241 residues long: Ribosomal RNA small subunit methyltransferase G (241 aa).

S-adenosyl-L-methionine is bound by residues Gly-96, Phe-101, 119 to 121, 147 to 148, and Arg-166; these read EAS and VE.

This sequence belongs to the methyltransferase superfamily. RNA methyltransferase RsmG family.

The protein resides in the cytoplasm. The catalysed reaction is guanosine(527) in 16S rRNA + S-adenosyl-L-methionine = N(7)-methylguanosine(527) in 16S rRNA + S-adenosyl-L-homocysteine. Functionally, specifically methylates the N7 position of guanine in position 527 of 16S rRNA. This Syntrophus aciditrophicus (strain SB) protein is Ribosomal RNA small subunit methyltransferase G.